The primary structure comprises 277 residues: Caspase-3 (277 aa).

Methionine 1 carries the N-acetylmethionine modification. 2 consecutive propeptides follow at residues 1-9 (MENNETSVD) and 10-28 (AKSI…KSMD). N6-acetyllysine is present on lysine 11. Serine 26 carries the phosphoserine modification. Catalysis depends on residues histidine 121 and cysteine 163. Residue cysteine 163 is modified to S-nitrosocysteine; in inhibited form.

The protein belongs to the peptidase C14A family. As to quaternary structure, heterotetramer that consists of two anti-parallel arranged heterodimers, each one formed by a 17 kDa (p17) and a 12 kDa (p12) subunit. Interacts with BIRC6/bruce. In terms of processing, cleavage by granzyme B, caspase-6, caspase-8 and caspase-10 generates the two active subunits. Additional processing of the propeptides is likely due to the autocatalytic activity of the activated protease. Active heterodimers between the small subunit of caspase-7 protease and the large subunit of caspase-3 also occur and vice versa. S-nitrosylated on its catalytic site cysteine in unstimulated cell lines and denitrosylated upon activation of the Fas apoptotic pathway, associated with an increase in intracellular caspase activity. Fas therefore activates caspase-3 not only by inducing the cleavage of the caspase zymogen to its active subunits, but also by stimulating the denitrosylation of its active site thiol. Post-translationally, ubiquitinated by BIRC6; this activity is inhibited by DIABLO/SMAC.

It localises to the cytoplasm. The catalysed reaction is Strict requirement for an Asp residue at positions P1 and P4. It has a preferred cleavage sequence of Asp-Xaa-Xaa-Asp-|- with a hydrophobic amino-acid residue at P2 and a hydrophilic amino-acid residue at P3, although Val or Ala are also accepted at this position.. Inhibited by BIRC6; following inhibition of BIRC6-caspase binding by DIABLO/SMAC, BIRC6 is subjected to caspase cleavage, leading to an increase in active caspases. Functionally, involved in the activation cascade of caspases responsible for apoptosis execution. At the onset of apoptosis, it proteolytically cleaves poly(ADP-ribose) polymerase PARP1 at a '216-Asp-|-Gly-217' bond. Cleaves and activates sterol regulatory element binding proteins (SREBPs) between the basic helix-loop-helix leucine zipper domain and the membrane attachment domain. Cleaves and activates caspase-6, -7 and -9 (CASP6, CASP7 and CASP9, respectively). Cleaves and inactivates interleukin-18 (IL18). Triggers cell adhesion in sympathetic neurons through RET cleavage. Cleaves IL-1 beta between an Asp and an Ala, releasing the mature cytokine which is involved in a variety of inflammatory processes. Cleaves and inhibits serine/threonine-protein kinase AKT1 in response to oxidative stress. Acts as an inhibitor of type I interferon production during virus-induced apoptosis by mediating cleavage of antiviral proteins CGAS, IRF3 and MAVS, thereby preventing cytokine overproduction. Also involved in pyroptosis by mediating cleavage and activation of gasdermin-E (GSDME). Cleaves XRCC4 and phospholipid scramblase proteins XKR4, XKR8 and XKR9, leading to promote phosphatidylserine exposure on apoptotic cell surface. Cleaves BIRC6 following inhibition of BIRC6-caspase binding by DIABLO/SMAC. This chain is Caspase-3 (CASP3), found in Oryctolagus cuniculus (Rabbit).